Consider the following 188-residue polypeptide: HGPRTase-like protein 1 (188 aa).

This sequence belongs to the purine/pyrimidine phosphoribosyltransferase family. Archaeal HPRT subfamily.

In terms of biological role, may catalyze a purine salvage reaction, the substrate is unknown. The chain is HGPRTase-like protein 1 from Haloferax volcanii (strain ATCC 29605 / DSM 3757 / JCM 8879 / NBRC 14742 / NCIMB 2012 / VKM B-1768 / DS2) (Halobacterium volcanii).